Here is a 484-residue protein sequence, read N- to C-terminus: Aspartyl/glutamyl-tRNA(Asn/Gln) amidotransferase subunit B (484 aa).

It belongs to the GatB/GatE family. GatB subfamily. As to quaternary structure, heterotrimer of A, B and C subunits.

It catalyses the reaction L-glutamyl-tRNA(Gln) + L-glutamine + ATP + H2O = L-glutaminyl-tRNA(Gln) + L-glutamate + ADP + phosphate + H(+). It carries out the reaction L-aspartyl-tRNA(Asn) + L-glutamine + ATP + H2O = L-asparaginyl-tRNA(Asn) + L-glutamate + ADP + phosphate + 2 H(+). In terms of biological role, allows the formation of correctly charged Asn-tRNA(Asn) or Gln-tRNA(Gln) through the transamidation of misacylated Asp-tRNA(Asn) or Glu-tRNA(Gln) in organisms which lack either or both of asparaginyl-tRNA or glutaminyl-tRNA synthetases. The reaction takes place in the presence of glutamine and ATP through an activated phospho-Asp-tRNA(Asn) or phospho-Glu-tRNA(Gln). The protein is Aspartyl/glutamyl-tRNA(Asn/Gln) amidotransferase subunit B of Anaeromyxobacter dehalogenans (strain 2CP-C).